The sequence spans 996 residues: Cilia- and flagella-associated protein 251 (996 aa).

11 WD repeats span residues 73-114, 118-164, 168-211, 219-258, 282-319, 399-438, 445-485, 494-533, 547-593, 615-658, and 719-759; these read GHCN…PKKT, PHPN…EPCL, EFDR…KGFN, PSLKVLTQTVFIPDNTQVVTGTTDGHIIVWDISLIIEKVD, KGSNSINILKIQDNYLVIGSSNGSIRFYDFQYRIIAWF, SIVSPIIAMSCRPNSNVIGICCENGYLYEWNFQEKSSVLS, TDKE…WQNS, QGKPKVNMQVFSSDSKNLATMDADYAVSLFTIDHRQFDVN, IHHS…YSKQ, EQET…FKFC, and AHPD…LEQI. A disordered region spans residues 971–996; that stretch reads DLEGEERDDNIEDQYEDEENEEYDQD.

The protein resides in the cell projection. It localises to the cilium. As component of a spoke-associated complex, regulates ciliary mobility by mediating a stable and functional assembly of the radial spoke 3 (RS3). The sequence is that of Cilia- and flagella-associated protein 251 from Tetrahymena thermophila (strain SB210).